The following is a 216-amino-acid chain: MAKIQLVAQANLPTEYGIFKMVGFEFLDTKKEHVALVMGDISNADEPVLARIHSECLTGDALHSLKCDCGFQLATALKQIQEEGRGVLIYHREEGRGIGLINKIRAYSLQDKGMDTIEANLALGFKADERNFEVCADMFELLGVKKVRLMTNNPEKVETMKKAGINVVERVPLNVGENRYNTKYLDTKAKKMGHYIVHNNDEQHLMTCPHCQEEII.

51–55 (RIHSE) is a binding site for GTP. Residues Cys-56, Cys-67, and Cys-69 each coordinate Zn(2+). GTP contacts are provided by residues Gln-72, 94 to 96 (EGR), and Thr-116. Asp-128 functions as the Proton acceptor in the catalytic mechanism. The Nucleophile role is filled by Arg-130. Thr-151 and Lys-156 together coordinate GTP.

This sequence belongs to the GTP cyclohydrolase II family. The cofactor is Zn(2+).

The enzyme catalyses GTP + 4 H2O = 2,5-diamino-6-hydroxy-4-(5-phosphoribosylamino)-pyrimidine + formate + 2 phosphate + 3 H(+). It functions in the pathway cofactor biosynthesis; riboflavin biosynthesis; 5-amino-6-(D-ribitylamino)uracil from GTP: step 1/4. Its function is as follows. Catalyzes the conversion of GTP to 2,5-diamino-6-ribosylamino-4(3H)-pyrimidinone 5'-phosphate (DARP), formate and pyrophosphate. This Haemophilus influenzae (strain PittEE) protein is GTP cyclohydrolase-2.